Here is a 149-residue protein sequence, read N- to C-terminus: Large ribosomal subunit protein uL24 (149 aa).

It belongs to the universal ribosomal protein uL24 family. As to quaternary structure, part of the 50S ribosomal subunit.

One of two assembly initiator proteins, it binds directly to the 5'-end of the 23S rRNA, where it nucleates assembly of the 50S subunit. Its function is as follows. Located at the polypeptide exit tunnel on the outside of the subunit. This chain is Large ribosomal subunit protein uL24, found in Hyperthermus butylicus (strain DSM 5456 / JCM 9403 / PLM1-5).